We begin with the raw amino-acid sequence, 933 residues long: Progesterone receptor (933 aa).

The interval 1–164 (MTELKAKGPR…PATQGVLSPL (164 aa)) is AF3; mediates transcriptional activation. The tract at residues 1-256 (MTELKAKGPR…AAAGGGAAAV (256 aa)) is disordered. A modulating, Pro-Rich region spans residues 1–566 (MTELKAKGPR…YSFESLPQKI (566 aa)). Phosphoserine is present on S20. The short motif at 55-59 (LDGLL) is the LXXL motif 1 element. S81 carries the phosphoserine modification. Positions 115 to 119 (LETLL) match the LXXL motif 2 motif. 2 positions are modified to phosphoserine: S130 and S162. The interval 165–305 (MSRSGGKAGD…LATTVMDFIH (141 aa)) is mediates transcriptional transrepression. A Nuclear localization signal motif is present at residues 183–187 (KVLPR). Residues S190 and S213 each carry the phosphoserine modification. Residues 220–231 (EVEEEDGSESEE) show a composition bias toward acidic residues. Residues 232–246 (SAGPLLKGKPRALGG) are compositionally biased toward low complexity. The residue at position 294 (S294) is a Phosphoserine; by MAPK1. Residues 331-378 (GGAGAASAFAPPRSSPSASSTPVAVGDFPDCAYPPDAEPKDDAYPLYS) form a disordered region. Residues 335-350 (AASAFAPPRSSPSASS) are compositionally biased toward low complexity. Position 345 is a phosphoserine; by MAPK (S345). A Glycyl lysine isopeptide (Lys-Gly) (interchain with G-Cter in SUMO); alternate cross-link involves residue K388. K388 is covalently cross-linked (Glycyl lysine isopeptide (Lys-Gly) (interchain with G-Cter in ubiquitin); alternate). S400 is modified (phosphoserine; by CDK2). Residues 415–452 (PDFPLGPPPPLPPRAPPSRPGEAAVTAAPASASVSSAS) form a disordered region. Pro residues predominate over residues 418–433 (PLGPPPPLPPRAPPSR). Over residues 434-452 (PGEAAVTAAPASASVSSAS) the composition is skewed to low complexity. Residues 456–546 (STLECILYKA…VYPPYLNYLR (91 aa)) form an AF1; mediates transcriptional activation region. K531 is covalently cross-linked (Glycyl lysine isopeptide (Lys-Gly) (interchain with G-Cter in SUMO)). NR C4-type zinc fingers lie at residues 567 to 587 (CLIC…CGSC) and 603 to 627 (CAGR…LRKC). Residues 567–639 (CLICGDEASG…AGMVLGGRKF (73 aa)) constitute a DNA-binding region (nuclear receptor). At S676 the chain carries Phosphoserine. The region spanning 679–913 (QDIQLIPPLI…EFPEMMSEVI (235 aa)) is the NR LBD domain. Positions 687 to 933 (LINLLMSIEP…MVKPLLFHKK (247 aa)) are AF2; mediates transcriptional activation. R766 serves as a coordination point for progesterone.

Belongs to the nuclear hormone receptor family. Interacts with SMARD1 and UNC45A. Interacts with CUEDC2; the interaction promotes ubiquitination, decreases sumoylation, and represses transcriptional activity. Interacts with PIAS3; the interaction promotes sumoylation of PR in a hormone-dependent manner, inhibits DNA-binding, and alters nuclear export. Interacts with SP1; the interaction requires ligand-induced phosphorylation on Ser-345 by ERK1/2-MAPK. Interacts with PRMT2. Interacts with NCOA2 and NCOA1. Interacts with KLF9. Interacts with GTF2B. In terms of processing, phosphorylated on multiple serine sites. Several of these sites are hormone-dependent. Phosphorylation on Ser-294 is highly hormone-dependent and modulates ubiquitination and sumoylation on Lys-388. Phosphorylation on Ser-102 and Ser-345 also requires induction by hormone. Basal phosphorylation on Ser-81, Ser-162, Ser-190 and Ser-400 is increased in response to progesterone and can be phosphorylated in vitro by the CDK2-A1 complex. Increased levels of phosphorylation on Ser-400 also in the presence of EGF, heregulin, IGF, PMA and FBS. Phosphorylation at this site by CDK2 is ligand-independent, and increases nuclear translocation and transcriptional activity. Phosphorylation at Ser-162 and Ser-294, but not at Ser-190, is impaired during the G(2)/M phase of the cell cycle. Phosphorylation on Ser-345 by ERK1/2 MAPK is required for interaction with SP1. Sumoylation is hormone-dependent and represses transcriptional activity. Sumoylation on all three sites is enhanced by PIAS3. Desumoylated by SENP1. Sumoylation on Lys-388, the main site of sumoylation, is repressed by ubiquitination on the same site, and modulated by phosphorylation at Ser-294. Post-translationally, ubiquitination is hormone-dependent and represses sumoylation on the same site. Promoted by MAPK-mediated phosphorylation on Ser-294. Ubiquitinated by UBR5, leading to its degradation: UBR5 specifically recognizes and binds ligand-bound PGR when it is not associated with coactivators (NCOAs). In presence of NCOAs, the UBR5-degron is not accessible, preventing its ubiquitination and degradation. In terms of processing, palmitoylated by ZDHHC7 and ZDHHC21. Palmitoylation is required for plasma membrane targeting and for rapid intracellular signaling via ERK and AKT kinases and cAMP generation.

Its subcellular location is the nucleus. It localises to the cytoplasm. Its function is as follows. The steroid hormones and their receptors are involved in the regulation of eukaryotic gene expression and affect cellular proliferation and differentiation in target tissues. Transcriptional activator of several progesteron-dependent promoters in a variety of cell types. Involved in activation of SRC-dependent MAPK signaling on hormone stimulation. This Gorilla gorilla gorilla (Western lowland gorilla) protein is Progesterone receptor (PGR).